The sequence spans 159 residues: Nucleotide-binding protein PSPTO_4393 (159 aa).

The protein belongs to the YajQ family.

In terms of biological role, nucleotide-binding protein. This Pseudomonas syringae pv. tomato (strain ATCC BAA-871 / DC3000) protein is Nucleotide-binding protein PSPTO_4393.